Reading from the N-terminus, the 386-residue chain is Succinate--CoA ligase [ADP-forming] subunit beta (386 aa).

In terms of domain architecture, ATP-grasp spans 9 to 244 (KAVLRSYGVS…LDEEDSKEIE (236 aa)). Residues Lys46, 53–55 (GRG), Glu99, Cys102, and Glu107 each bind ATP. Asn199 and Asp213 together coordinate Mg(2+). Residues Asn264 and 321-323 (GIM) each bind substrate.

This sequence belongs to the succinate/malate CoA ligase beta subunit family. Heterotetramer of two alpha and two beta subunits. Mg(2+) is required as a cofactor.

It carries out the reaction succinate + ATP + CoA = succinyl-CoA + ADP + phosphate. It catalyses the reaction GTP + succinate + CoA = succinyl-CoA + GDP + phosphate. It participates in carbohydrate metabolism; tricarboxylic acid cycle; succinate from succinyl-CoA (ligase route): step 1/1. Succinyl-CoA synthetase functions in the citric acid cycle (TCA), coupling the hydrolysis of succinyl-CoA to the synthesis of either ATP or GTP and thus represents the only step of substrate-level phosphorylation in the TCA. The beta subunit provides nucleotide specificity of the enzyme and binds the substrate succinate, while the binding sites for coenzyme A and phosphate are found in the alpha subunit. The chain is Succinate--CoA ligase [ADP-forming] subunit beta from Bacillus cereus (strain G9842).